The following is a 217-amino-acid chain: Large ribosomal subunit protein eL14 (217 aa).

Lys79 carries the N6-acetyllysine modification. N6-acetyllysine; alternate is present on Lys85. N6-succinyllysine; alternate is present on Lys85. A Glycyl lysine isopeptide (Lys-Gly) (interchain with G-Cter in SUMO2) cross-link involves residue Lys124. Ser139 bears the Phosphoserine mark. A disordered region spans residues 162-217 (KVPAKKATGPGKKAAGQKAPAQKAAGQKAAPPAKGQKGQKTPAQKAPAPKAAGKKA). A 1-1; approximate repeat occupies 173 to 177 (KKAAG). The tract at residues 173–192 (KKAAGQKAPAQKAAGQKAAP) is 4 X 5 AA tandem repeats of Q-K-A-[APS]-X. 5 tandem repeats follow at residues 178–182 (QKAPA), 183–187 (QKAAG), 188–192 (QKAAP), 195–197 (KGQ), and 198–200 (KGQ). A 2 X 3 AA tandem repeats of K-G-Q region spans residues 195–200 (KGQKGQ). Residue Lys206 is modified to N6-succinyllysine.

It belongs to the eukaryotic ribosomal protein eL14 family. Component of the large ribosomal subunit.

It is found in the cytoplasm. Component of the large ribosomal subunit. The ribosome is a large ribonucleoprotein complex responsible for the synthesis of proteins in the cell. The polypeptide is Large ribosomal subunit protein eL14 (Rpl14) (Mus musculus (Mouse)).